The primary structure comprises 433 residues: Serine hydroxymethyltransferase (433 aa).

Residue 122-124 (AHV) participates in (6S)-5,6,7,8-tetrahydrofolate binding. Lys-228 is subject to N6-(pyridoxal phosphate)lysine.

It belongs to the SHMT family. In terms of assembly, homodimer. Requires pyridoxal 5'-phosphate as cofactor.

The protein resides in the cytoplasm. The protein operates within amino-acid biosynthesis; glycine biosynthesis; glycine from L-serine: step 1/1. Functionally, catalyzes the reversible interconversion of serine and glycine with a modified folate serving as the one-carbon carrier. Also exhibits a pteridine-independent aldolase activity toward beta-hydroxyamino acids, producing glycine and aldehydes, via a retro-aldol mechanism. The sequence is that of Serine hydroxymethyltransferase from Sulfolobus acidocaldarius (strain ATCC 33909 / DSM 639 / JCM 8929 / NBRC 15157 / NCIMB 11770).